A 166-amino-acid chain; its full sequence is Interferon gamma (166 aa).

An N-terminal signal peptide occupies residues 1–23; the sequence is MKYTSYILAFQLCIVLGSLGCYC. Q24 bears the Pyrrolidone carboxylic acid mark. N-linked (GlcNAc...) asparagine glycosylation is present at N48. N-linked (GlcNAc...) asparagine; in dimeric form glycosylation occurs at N120. The segment at 147–166 is disordered; that stretch reads AKTGKRKRSQMLFRGRRASQ. Positions 149–166 are enriched in basic residues; it reads TGKRKRSQMLFRGRRASQ. The propeptide occupies 162 to 166; sequence RRASQ.

This sequence belongs to the type II (or gamma) interferon family. Homodimer. Interacts with IFNGR1 (via extracellular domain); this interaction promotes IFNGR1 dimerization. Post-translationally, proteolytic processing produces C-terminal heterogeneity, with proteins ending alternatively at Gly-150, Met-157 or Gly-161. As to expression, released primarily from activated T lymphocytes.

It localises to the secreted. Functionally, type II interferon produced by immune cells such as T-cells and NK cells that plays crucial roles in antimicrobial, antiviral, and antitumor responses by activating effector immune cells and enhancing antigen presentation. Primarily signals through the JAK-STAT pathway after interaction with its receptor IFNGR1 to affect gene regulation. Upon IFNG binding, IFNGR1 intracellular domain opens out to allow association of downstream signaling components JAK2, JAK1 and STAT1, leading to STAT1 activation, nuclear translocation and transcription of IFNG-regulated genes. Many of the induced genes are transcription factors such as IRF1 that are able to further drive regulation of a next wave of transcription. Plays a role in class I antigen presentation pathway by inducing a replacement of catalytic proteasome subunits with immunoproteasome subunits. In turn, increases the quantity, quality, and repertoire of peptides for class I MHC loading. Increases the efficiency of peptide generation also by inducing the expression of activator PA28 that associates with the proteasome and alters its proteolytic cleavage preference. Up-regulates as well MHC II complexes on the cell surface by promoting expression of several key molecules such as cathepsins B/CTSB, H/CTSH, and L/CTSL. Participates in the regulation of hematopoietic stem cells during development and under homeostatic conditions by affecting their development, quiescence, and differentiation. This chain is Interferon gamma (IFNG), found in Homo sapiens (Human).